The following is a 500-amino-acid chain: Chromosomal replication initiator protein DnaA (500 aa).

The segment at 1-81 (MVNASGDPVI…LQALRTVTGE (81 aa)) is domain I, interacts with DnaA modulators. The segment at 81–155 (ENMFPAFKVV…QQKMNRDPET (75 aa)) is domain II. The segment at 156–377 (HLNKNFTFDS…GALTRVTAVA (222 aa)) is domain III, AAA+ region. The ATP site is built by Gly-200, Gly-202, Lys-203, and Thr-204. A domain IV, binds dsDNA region spans residues 378 to 500 (SLSNQPVTRA…TVRLKQSNTN (123 aa)).

It belongs to the DnaA family. Oligomerizes as a right-handed, spiral filament on DNA at oriC.

It is found in the cytoplasm. Its function is as follows. Plays an essential role in the initiation and regulation of chromosomal replication. ATP-DnaA binds to the origin of replication (oriC) to initiate formation of the DNA replication initiation complex once per cell cycle. Binds the DnaA box (a 9 base pair repeat at the origin) and separates the double-stranded (ds)DNA. Forms a right-handed helical filament on oriC DNA; dsDNA binds to the exterior of the filament while single-stranded (ss)DNA is stabiized in the filament's interior. The ATP-DnaA-oriC complex binds and stabilizes one strand of the AT-rich DNA unwinding element (DUE), permitting loading of DNA polymerase. After initiation quickly degrades to an ADP-DnaA complex that is not apt for DNA replication. Binds acidic phospholipids. The chain is Chromosomal replication initiator protein DnaA from Bifidobacterium longum subsp. infantis (strain ATCC 15697 / DSM 20088 / JCM 1222 / NCTC 11817 / S12).